A 560-amino-acid polypeptide reads, in one-letter code: NRAMP-like transporter smf-3 (560 aa).

The Cytoplasmic portion of the chain corresponds to 1-43; that stretch reads MEGEMKCPIEEIREKPEMRKAQQTYEVQVEVEDTPDTTFSWRK. The helical transmembrane segment at 44-64 threads the bilayer; sequence LWAFTGPGFLMSIAYLDPGNI. At 65–71 the chain is on the extracellular side; it reads ESDLQAG. The chain crosses the membrane as a helical span at residues 72-92; sequence AISYFKLIWVLLVAHIMGLLL. The Cytoplasmic segment spans residues 93–120; sequence QRLAARLGVVSGKHMAEIAFSYYPKIPR. A helical transmembrane segment spans residues 121–141; the sequence is LVLWMLVESAIVGSDMQEVIG. Topologically, residues 142 to 152 are extracellular; that stretch reads TAISFYLLSNG. A helical membrane pass occupies residues 153–173; sequence VIPLWAGVLITICDTFTFLFL. Residues 174–182 lie on the Cytoplasmic side of the membrane; it reads EKYGVRKFE. A helical transmembrane segment spans residues 183–203; sequence AFFCFLITCMAITFGYEFGVS. The Extracellular segment spans residues 204–229; the sequence is APDAGKMFSGMFVPWCNGCDNNMVMQ. Residues 230 to 250 form a helical membrane-spanning segment; it reads GVAIIGAVIMPHNFYLHSALV. The Cytoplasmic portion of the chain corresponds to 251–268; that stretch reads KSRRVDRRRAEKVTEANK. Residues 269-289 form a helical membrane-spanning segment; that stretch reads YFFIESAFALFVSFIINTLVI. Residues 290–339 are Extracellular-facing; it reads SVFAQGMYGKTNQDIRDTCYNNTHNGMPDFYKVEFPANNDAAQSDIYHAG. An N-linked (GlcNAc...) asparagine glycan is attached at asparagine 310. Residues 340–360 traverse the membrane as a helical segment; the sequence is IFLGCTFGIFALYVWAVGILA. Topologically, residues 361–390 are cytoplasmic; sequence AGQSSTMTGTYAGQFAMEGFIQIKLPQWKR. Residues 391–411 traverse the membrane as a helical segment; it reads ILITRSLAILPTLAVVIFSGG. The Extracellular segment spans residues 412 to 420; it reads IDNISSLND. N-linked (GlcNAc...) asparagine glycosylation occurs at asparagine 414. The helical transmembrane segment at 421 to 441 threads the bilayer; it reads FLNCLQLIQLPFALIPVLTFV. Residues 442–458 lie on the Cytoplasmic side of the membrane; sequence SDRNIMHEYKLASVSKV. Residues 459 to 479 traverse the membrane as a helical segment; sequence VSIVISLIILFINFYFLYSWI. Over 480–486 the chain is Extracellular; the sequence is GSTFGYN. Residues 487–507 traverse the membrane as a helical segment; that stretch reads AVSIPITIFCAIFYIIFIAYL. Residues 508–560 are Cytoplasmic-facing; it reads TYYCLVAMEFISPIQTKWLAEPIYHDFDAPWLEDSENPSTKNTISDDELSMRY.

Belongs to the NRAMP family. In terms of tissue distribution, expressed in dopaminergic neurons (at protein level). Expressed in intestine with a weaker expression in the most proximal and distal regions. Weakly expressed in the hyp1-6, hyp7 and hyp8-12 hypodermis and in head and tail neurons.

Its subcellular location is the apical cell membrane. It localises to the cytoplasmic vesicle membrane. Probable divalent metal ion transporter which regulates the uptake of several heavy metals such as Mn(2+), Al(3+) and iron. Plays a role in modulating Al(3+)-induced dopamine (DA) neuron degeneration through the intracellular sequestration of Al(3+). The sequence is that of NRAMP-like transporter smf-3 from Caenorhabditis elegans.